Consider the following 547-residue polypeptide: MNAFTRAWYALERHYQDTRHVLLRDRFACEPDRFERMHERLDGMLFDYSKNRLGEDTLQLLCRLAETADLEGKMRALRTGAKVNNSEGRAALHTALRLPDGAGAVYADGRDVLPEIRRELNRALKFAHSLDDGSYQGTTGKRITDFVHIGIGGSDLGPAMCVQALEPFRRHIAVHFAANADPACLDEVLCRLNPETTVFCVASKSFKTPETLLNAEAVKAWYRGAGFSESETGCHFCAVSADTEAAQSFGIAAERVFAMYDWVGGRYSVWSPVGLPVMVAVGGARFRELLAGAHAMDSHFFHTPPRRNIPVLMALIAVWYNNFQHADGQTAVPYSHNLRLLPAWLNQLDMESLGKSRASDGSPAACKTGGIVFGGEGVNCQHAYFQLLHQGTRLIPCDFIVPMTAQGVEDGRSRFTVANAFAQAEALMKGKTLDEARAELADLPEAERERLAPHKEFPGNRPSNSILLERLTPYNLGMLMAAYEHKTFVQGVIWDINPFDQWGVEYGKQLAKTIIGELEGGTSVHDASTEGLMAFYRECRLKGGGAA.

The active-site Proton donor is glutamate 351. Catalysis depends on residues histidine 382 and lysine 508.

It belongs to the GPI family.

It localises to the cytoplasm. It carries out the reaction alpha-D-glucose 6-phosphate = beta-D-fructose 6-phosphate. It functions in the pathway carbohydrate biosynthesis; gluconeogenesis. Its pathway is carbohydrate degradation; glycolysis; D-glyceraldehyde 3-phosphate and glycerone phosphate from D-glucose: step 2/4. In terms of biological role, catalyzes the reversible isomerization of glucose-6-phosphate to fructose-6-phosphate. In Neisseria meningitidis serogroup A / serotype 4A (strain DSM 15465 / Z2491), this protein is Glucose-6-phosphate isomerase 2.